Reading from the N-terminus, the 749-residue chain is Disintegrin and metalloproteinase domain-containing protein 10 (749 aa).

Positions 1–19 (MVLPTVLILLLSWAAGLGG) are cleaved as a signal peptide. Positions 20 to 214 (QYGNPLNKYI…SGPELLRKKR (195 aa)) are excised as a propeptide. Over 20–673 (QYGNPLNKYI…SPQLYENIAE (654 aa)) the chain is Extracellular. A Cysteine switch motif is present at residues 171 to 178 (GGCADHSV). Position 173 (C173) interacts with Zn(2+). A Peptidase M12B domain is found at 221–457 (NTCQLYIQTD…KRNNCFVESG (237 aa)). 17 disulfides stabilise this stretch: C223–C314, C345–C452, C400–C436, C461–C496, C472–C485, C474–C480, C484–C516, C504–C512, C511–C537, C525–C544, C531–C563, C556–C568, C573–C599, C581–C608, C583–C598, C595–C640, and C633–C646. Residues N268 and N279 are each glycosylated (N-linked (GlcNAc...) asparagine). Residue H384 participates in Zn(2+) binding. E385 is a catalytic residue. 2 residues coordinate Zn(2+): H388 and H394. Residue N440 is glycosylated (N-linked (GlcNAc...) asparagine). The region spanning 458–552 (QPICGNGMVE…LCPASDPKPN (95 aa)) is the Disintegrin domain. A glycan (N-linked (GlcNAc...) asparagine) is linked at N552. A helical membrane pass occupies residues 674-694 (WIVAHWWAVLLMGIALIMLMA). Residues 695 to 749 (GFIKICSVHTPSSNPKLPPPKPLPGTLKRRRPPQPIQQPPRQRPRESYQMGHMRR) are Cytoplasmic-facing. The segment at 705-749 (PSSNPKLPPPKPLPGTLKRRRPPQPIQQPPRQRPRESYQMGHMRR) is disordered. The SH3-binding motif lies at 709–716 (PKLPPPKP). T720 carries the phosphothreonine modification. The SH3-binding motif lies at 723–729 (RRRPPQP). Positions 735–749 (RQRPRESYQMGHMRR) are interaction with AP2A1, AP2A2 and AP2M1.

In terms of assembly, forms a ternary EFNA5-EPHA3-ADAM10 complex mediating EFNA5 extracellular domain shedding by ADAM10 which regulates the EFNA5-EPHA3 complex internalization and function, the cleavage occurs in trans, with ADAM10 and its substrate being on the membranes of opposing cells. Interacts with the clathrin adapter AP2 complex subunits AP2A1, AP2A2, AP2B1, and AP2M1; this interaction facilitates ADAM10 endocytosis from the plasma membrane during long-term potentiation in hippocampal neurons. Forms a ternary complex composed of ADAM10, EPHA4 and CADH1; within the complex, ADAM10 cleaves CADH1 which disrupts adherens junctions. Interacts with EPHA2. Interacts with NGF in a divalent cation-dependent manner. Interacts with TSPAN14; the interaction promotes ADAM10 maturation and cell surface expression. Interacts with TSPAN5, TSPAN10, TSPAN14, TSPAN15, TSPAN17 and TSPAN33; these interactions regulate ADAM10 substrate specificity, endocytosis and turnover. Interacts (via extracellular domain) with TSPAN33 (via extracellular domain) and (via cytoplasmic domain) with AFDN; interaction with TSPAN33 allows the docking of ADAM10 to zonula adherens through a PDZ11-dependent interaction between TSPAN33 and PLEKHA7 while interaction with AFDN locks ADAM10 at zonula adherens. Interacts with DLG1; this interaction recruits ADAM10 to the cell membrane during long-term depression in hippocampal neurons. Interacts (via extracellular domain) with BACE1 (via extracellular domain). Interacts with FAM171A1. The cofactor is Zn(2+). In terms of processing, the precursor is cleaved by furin and PCSK7. Expressed in the brain, specifically in neurons and astrocytes (at protein level). Expressed in inner and outer pillar cells of the organ of Corti (at protein level). Expressed in kidney and lung.

Its subcellular location is the cell membrane. The protein localises to the golgi apparatus membrane. The protein resides in the cytoplasmic vesicle. It is found in the clathrin-coated vesicle. It localises to the cell projection. Its subcellular location is the axon. The protein localises to the dendrite. The protein resides in the cell junction. It is found in the adherens junction. It localises to the cytoplasm. The enzyme catalyses Endopeptidase of broad specificity.. With respect to regulation, catalytically inactive when the propeptide is intact and associated with the mature enzyme. The disintegrin and cysteine-rich regions modulate access of substrates to exerts an inhibitory effect on the cleavage of ADAM10 substrates. In terms of biological role, transmembrane metalloprotease which mediates the ectodomain shedding of a myriad of transmembrane proteins, including adhesion proteins, growth factor precursors and cytokines being essential for development and tissue homeostasis. Associates with six members of the tetraspanin superfamily TspanC8 which regulate its exit from the endoplasmic reticulum and its substrate selectivity. Cleaves the membrane-bound precursor of TNF-alpha to its mature soluble form. Responsible for the proteolytical release of soluble JAM3 from endothelial cells surface. Responsible for the proteolytic release of several other cell-surface proteins, including heparin-binding epidermal growth-like factor, ephrin-A2, CD44, CDH2 and for constitutive and regulated alpha-secretase cleavage of amyloid precursor protein (APP) at '687-Lys-|-Leu-688'. Contributes to the normal cleavage of the cellular prion protein. Involved in the cleavage of the adhesion molecule L1 at the cell surface and in released membrane vesicles, suggesting a vesicle-based protease activity. Also controls the proteolytic processing of Notch and mediates lateral inhibition during neurogenesis. Required for the development of type 1 transitional B cells into marginal zone B cells, probably by cleaving Notch. Responsible for the FasL ectodomain shedding and for the generation of the remnant ADAM10-processed FasL (FasL APL) transmembrane form. Also cleaves the ectodomain of the integral membrane proteins CORIN and ITM2B. Mediates the proteolytic cleavage of LAG3, leading to release the secreted form of LAG3. Mediates the proteolytic cleavage of IL6R and IL11RA, leading to the release of secreted forms of IL6R and IL11RA. Enhances the cleavage of CHL1 by BACE1. Cleaves NRCAM. Cleaves TREM2, resulting in shedding of the TREM2 ectodomain. Involved in the development and maturation of glomerular and coronary vasculature. During development of the cochlear organ of Corti, promotes pillar cell separation by forming a ternary complex with CADH1 and EPHA4 and cleaving CADH1 at adherens junctions. May regulate the EFNA5-EPHA3 signaling. This chain is Disintegrin and metalloproteinase domain-containing protein 10 (Adam10), found in Mus musculus (Mouse).